Here is a 255-residue protein sequence, read N- to C-terminus: MPRYALRIEYDGGPFAGWQRQAAQASVQGAIETALGRLEPGPHTIAAAGRTDTGVHATGQVAHCDLVREWDPFRLAGALNAHLKPLPVAIVAAARVPEEFHARFSAVERRYLFRLLARRAPEVHDRGRVWRVPHPLDPEAMRAGAAHLVGRHDFTTFRAAGCQAASPVKTLDALTLETVEGMNGTEYRFHLRARSFLHNQVRSIVGTLERVGAGAWTPDQVREALEAHDRAACGPVCPPQGLYLTGVGYPADPFA.

The Nucleophile role is filled by Asp-52. Residue Tyr-111 coordinates substrate.

This sequence belongs to the tRNA pseudouridine synthase TruA family. In terms of assembly, homodimer.

The catalysed reaction is uridine(38/39/40) in tRNA = pseudouridine(38/39/40) in tRNA. Its function is as follows. Formation of pseudouridine at positions 38, 39 and 40 in the anticodon stem and loop of transfer RNAs. The protein is tRNA pseudouridine synthase A of Cereibacter sphaeroides (strain ATCC 17029 / ATH 2.4.9) (Rhodobacter sphaeroides).